A 195-amino-acid polypeptide reads, in one-letter code: 5'-deoxynucleotidase SO_2484 (195 aa).

Substrate is bound by residues 16-17 (RW) and H31. One can recognise an HD domain in the interval 28-140 (VQEHSLQVAM…VKSADTLCAY (113 aa)). A divalent metal cation-binding residues include H31, H66, and D67. Substrate-binding positions include D67, 75–78 (DLPT), and D135. D135 lines the a divalent metal cation pocket.

It belongs to the 5DNU family. Homodimer. It depends on a divalent metal cation as a cofactor.

It localises to the cytoplasm. The catalysed reaction is a 2'-deoxyribonucleoside 5'-phosphate + H2O = a 2'-deoxyribonucleoside + phosphate. Functionally, catalyzes the strictly specific dephosphorylation of 2'-deoxyribonucleoside 5'-monophosphates. The sequence is that of 5'-deoxynucleotidase SO_2484 from Shewanella oneidensis (strain ATCC 700550 / JCM 31522 / CIP 106686 / LMG 19005 / NCIMB 14063 / MR-1).